Reading from the N-terminus, the 402-residue chain is Phosphoglycerate kinase (402 aa).

Residues 24–26 (DFN), Arg40, 63–66 (HFGR), Arg122, and Arg155 each bind substrate. ATP contacts are provided by residues Lys206, Gly297, Glu328, and 357–360 (GGDS).

The protein belongs to the phosphoglycerate kinase family. As to quaternary structure, monomer.

It localises to the cytoplasm. It carries out the reaction (2R)-3-phosphoglycerate + ATP = (2R)-3-phospho-glyceroyl phosphate + ADP. The protein operates within carbohydrate degradation; glycolysis; pyruvate from D-glyceraldehyde 3-phosphate: step 2/5. This chain is Phosphoglycerate kinase, found in Prochlorococcus marinus (strain MIT 9211).